Here is a 488-residue protein sequence, read N- to C-terminus: 3-octaprenyl-4-hydroxybenzoate carboxy-lyase (488 aa).

Residue Asn-172 coordinates Mn(2+). Prenylated FMN-binding positions include Ile-175–Arg-177, Arg-189–Leu-191, and Arg-194–Gly-195. Glu-238 serves as a coordination point for Mn(2+). The Proton donor role is filled by Asp-287.

It belongs to the UbiD family. Homohexamer. The cofactor is prenylated FMN. It depends on Mn(2+) as a cofactor.

It localises to the cell membrane. It catalyses the reaction a 4-hydroxy-3-(all-trans-polyprenyl)benzoate + H(+) = a 2-(all-trans-polyprenyl)phenol + CO2. It participates in cofactor biosynthesis; ubiquinone biosynthesis. Functionally, catalyzes the decarboxylation of 3-octaprenyl-4-hydroxy benzoate to 2-octaprenylphenol, an intermediate step in ubiquinone biosynthesis. This Pseudomonas fluorescens (strain Pf0-1) protein is 3-octaprenyl-4-hydroxybenzoate carboxy-lyase.